Reading from the N-terminus, the 415-residue chain is tRNA(Ile)-lysidine synthase (415 aa).

Residue 36-41 coordinates ATP; sequence SGGRDS.

It belongs to the tRNA(Ile)-lysidine synthase family.

The protein localises to the cytoplasm. The catalysed reaction is cytidine(34) in tRNA(Ile2) + L-lysine + ATP = lysidine(34) in tRNA(Ile2) + AMP + diphosphate + H(+). In terms of biological role, ligates lysine onto the cytidine present at position 34 of the AUA codon-specific tRNA(Ile) that contains the anticodon CAU, in an ATP-dependent manner. Cytidine is converted to lysidine, thus changing the amino acid specificity of the tRNA from methionine to isoleucine. The polypeptide is tRNA(Ile)-lysidine synthase (Tropheryma whipplei (strain Twist) (Whipple's bacillus)).